A 127-amino-acid polypeptide reads, in one-letter code: MSDPLLDAADFTDDGLIPAIVQDAETDQVLMMAYMTAETLQETLDTGRMVYWSRSRQERWVKGQTSGHTQTVEEARLDCDGDTLLFRVHQEGGACHTGFRSCFHRRAADDGWTTDGEKVFDPDAVYE.

Residue aspartate 78 coordinates Mg(2+). Zn(2+) is bound at residue cysteine 79. Mg(2+)-binding residues include aspartate 80 and aspartate 82. Cysteine 95 and cysteine 102 together coordinate Zn(2+).

It belongs to the PRA-CH family. As to quaternary structure, homodimer. Mg(2+) serves as cofactor. The cofactor is Zn(2+).

It is found in the cytoplasm. The enzyme catalyses 1-(5-phospho-beta-D-ribosyl)-5'-AMP + H2O = 1-(5-phospho-beta-D-ribosyl)-5-[(5-phospho-beta-D-ribosylamino)methylideneamino]imidazole-4-carboxamide. Its pathway is amino-acid biosynthesis; L-histidine biosynthesis; L-histidine from 5-phospho-alpha-D-ribose 1-diphosphate: step 3/9. Catalyzes the hydrolysis of the adenine ring of phosphoribosyl-AMP. In Salinibacter ruber (strain DSM 13855 / M31), this protein is Phosphoribosyl-AMP cyclohydrolase.